A 404-amino-acid chain; its full sequence is Tryptophan synthase beta chain (404 aa).

The residue at position 94 (lysine 94) is an N6-(pyridoxal phosphate)lysine.

This sequence belongs to the TrpB family. In terms of assembly, tetramer of two alpha and two beta chains. Pyridoxal 5'-phosphate is required as a cofactor.

It carries out the reaction (1S,2R)-1-C-(indol-3-yl)glycerol 3-phosphate + L-serine = D-glyceraldehyde 3-phosphate + L-tryptophan + H2O. It functions in the pathway amino-acid biosynthesis; L-tryptophan biosynthesis; L-tryptophan from chorismate: step 5/5. The beta subunit is responsible for the synthesis of L-tryptophan from indole and L-serine. The polypeptide is Tryptophan synthase beta chain (Staphylococcus saprophyticus subsp. saprophyticus (strain ATCC 15305 / DSM 20229 / NCIMB 8711 / NCTC 7292 / S-41)).